A 329-amino-acid chain; its full sequence is GTP 3',8-cyclase (329 aa).

Positions 8-234 (VFARKFYYLR…QLRQRSDGPA (227 aa)) constitute a Radical SAM core domain. Arg17 serves as a coordination point for GTP. Cys24 and Cys28 together coordinate [4Fe-4S] cluster. S-adenosyl-L-methionine is bound at residue Tyr30. Cys31 lines the [4Fe-4S] cluster pocket. Position 68 (Arg68) interacts with GTP. Gly72 contacts S-adenosyl-L-methionine. Residue Thr99 participates in GTP binding. Ser123 contacts S-adenosyl-L-methionine. Lys160 provides a ligand contact to GTP. Met194 is a binding site for S-adenosyl-L-methionine. [4Fe-4S] cluster contacts are provided by Cys257 and Cys260. Position 262–264 (262–264 (RLR)) interacts with GTP. Cys274 contributes to the [4Fe-4S] cluster binding site.

It belongs to the radical SAM superfamily. MoaA family. Monomer and homodimer. The cofactor is [4Fe-4S] cluster.

It carries out the reaction GTP + AH2 + S-adenosyl-L-methionine = (8S)-3',8-cyclo-7,8-dihydroguanosine 5'-triphosphate + 5'-deoxyadenosine + L-methionine + A + H(+). Its pathway is cofactor biosynthesis; molybdopterin biosynthesis. Catalyzes the cyclization of GTP to (8S)-3',8-cyclo-7,8-dihydroguanosine 5'-triphosphate. In Shigella flexneri, this protein is GTP 3',8-cyclase.